Reading from the N-terminus, the 808-residue chain is Probable E3 ubiquitin-protein ligase hulA (808 aa).

The C2 domain occupies 1-112 (MGSNLPAQPN…QMGGDEMLTR (112 aa)). Disordered regions lie at residues 134–231 (NLST…GWER) and 275–346 (RRAH…YFVD). Polar residues-rich tracts occupy residues 142–159 (QANGLHRSNLQSSTSSGL) and 171–198 (GPSQLDPTASNPSLNPQRVPSTTRPSST). Positions 199 to 210 (VAPVNGAAAPGA) are enriched in low complexity. The span at 211–220 (SRTNLSSFED) shows a compositional bias: polar residues. The WW 1 domain maps to 223 to 256 (GRLPAGWERREDNLGRTYYVDHNTRTTTWTRPSS). Over residues 275-288 (RRAHQSRMLPEDRT) the composition is skewed to basic and acidic residues. The segment covering 289–303 (GASSPNLQENQQAQT) has biased composition (polar residues). Low complexity predominate over residues 317–326 (ATGATTAGTG). WW domains are found at residues 326 to 359 (GELPPGWEQRTTPEGRPYFVDHNTRTTTWVDPRR) and 386 to 419 (GPLPSGWEMRLTNTARVYFVDHNTKTTTWDDPRL). Residues 475–808 (SASDLKKRLM…VEETLGFGQE (334 aa)) enclose the HECT domain. C776 functions as the Glycyl thioester intermediate in the catalytic mechanism.

It belongs to the RSP5/NEDD4 family. In terms of assembly, interacts with creD.

It is found in the cytoplasm. The enzyme catalyses S-ubiquitinyl-[E2 ubiquitin-conjugating enzyme]-L-cysteine + [acceptor protein]-L-lysine = [E2 ubiquitin-conjugating enzyme]-L-cysteine + N(6)-ubiquitinyl-[acceptor protein]-L-lysine.. It functions in the pathway protein modification; protein ubiquitination. Functionally, E3 ubiquitin-protein ligase which accepts ubiquitin from an E2 ubiquitin-conjugating enzyme in the form of a thioester and then directly transfers the ubiquitin to targeted substrates. Probably involved in the regulatory network controlling carbon source utilization. The polypeptide is Probable E3 ubiquitin-protein ligase hulA (hulA) (Aspergillus terreus (strain NIH 2624 / FGSC A1156)).